The chain runs to 488 residues: MTKNNEAGWNLDHSYTTLPQSFYTEIPPTPVSSPELVKLNHSLAISLGFNPEELKKEAEIAIFAGNALPEGAHPLAQAYAGHQFGHFNMLGDGRALLIGEQMTPAGKRFDIQLKGSGPTPYSRRGDGRAALGPMLREYIISEAMYALDIPTTRSLAVVTTGEPTYRETKLPGAILTRVASSHIRVGTFQYAAARGSIEDLQSLADYTIKRHYPEIEDHENRYTALLQEVIKRQASLIAKWQLVGFIHGVMNTDNITISGETIDYGPCAFMDNYDQGTVFSSIDTQGRYAYGNQPYMAAWDLARLAESLIPILHEDEEEALKIAQDEISKFSVQYENQWFLGMKKKLGLFSNEEQDQSLIEQLLKMMEKFKADYTNTFRSLTLNTLENTPLFDSPEFKEWYKLWQSRLEKQDESKENAYEMMKNNNPSIIPRNHRVEEALEAAVTSGDYSVMEKLLEALANPYAYTTDQEEYCVPPAPTNRPYRTFCGT.

G91, G93, R94, K114, D126, G127, R177, and R184 together coordinate ATP. D253 (proton acceptor) is an active-site residue. N254 and D263 together coordinate Mg(2+). D263 serves as a coordination point for ATP.

This sequence belongs to the SELO family. The cofactor is Mg(2+). It depends on Mn(2+) as a cofactor.

The enzyme catalyses L-seryl-[protein] + ATP = 3-O-(5'-adenylyl)-L-seryl-[protein] + diphosphate. It carries out the reaction L-threonyl-[protein] + ATP = 3-O-(5'-adenylyl)-L-threonyl-[protein] + diphosphate. It catalyses the reaction L-tyrosyl-[protein] + ATP = O-(5'-adenylyl)-L-tyrosyl-[protein] + diphosphate. The catalysed reaction is L-histidyl-[protein] + UTP = N(tele)-(5'-uridylyl)-L-histidyl-[protein] + diphosphate. The enzyme catalyses L-seryl-[protein] + UTP = O-(5'-uridylyl)-L-seryl-[protein] + diphosphate. It carries out the reaction L-tyrosyl-[protein] + UTP = O-(5'-uridylyl)-L-tyrosyl-[protein] + diphosphate. In terms of biological role, nucleotidyltransferase involved in the post-translational modification of proteins. It can catalyze the addition of adenosine monophosphate (AMP) or uridine monophosphate (UMP) to a protein, resulting in modifications known as AMPylation and UMPylation. The sequence is that of Protein nucleotidyltransferase YdiU from Bacillus cereus (strain AH187).